A 224-amino-acid polypeptide reads, in one-letter code: Ribonuclease T (224 aa).

Residues 1–11 show a composition bias toward acidic residues; the sequence is MSEDLYEDDLD. A disordered region spans residues 1-22; it reads MSEDLYEDDLDTQGSSGPRHPM. Positions 32–206 constitute an Exonuclease domain; it reads VVVDVETGGF…YDTEKTAELF (175 aa). The Mg(2+) site is built by Asp35, Glu37, His193, and Asp198. His193 acts as the Proton donor/acceptor in catalysis.

The protein belongs to the RNase T family. As to quaternary structure, homodimer. Requires Mg(2+) as cofactor.

Its function is as follows. Trims short 3' overhangs of a variety of RNA species, leaving a one or two nucleotide 3' overhang. Responsible for the end-turnover of tRNA: specifically removes the terminal AMP residue from uncharged tRNA (tRNA-C-C-A). Also appears to be involved in tRNA biosynthesis. In Pseudomonas putida (strain ATCC 700007 / DSM 6899 / JCM 31910 / BCRC 17059 / LMG 24140 / F1), this protein is Ribonuclease T.